The following is a 221-amino-acid chain: Putative efflux system component YhbJ (221 aa).

A helical transmembrane segment spans residues 17 to 37 (LILTNIIGLIVVLAIIAGGAY).

The protein belongs to the membrane fusion protein (MFP) (TC 8.A.1) family.

Its subcellular location is the cell membrane. This is Putative efflux system component YhbJ (yhbJ) from Bacillus subtilis (strain 168).